A 568-amino-acid polypeptide reads, in one-letter code: Proline--tRNA ligase (568 aa).

Belongs to the class-II aminoacyl-tRNA synthetase family. ProS type 1 subfamily. As to quaternary structure, homodimer.

Its subcellular location is the cytoplasm. It carries out the reaction tRNA(Pro) + L-proline + ATP = L-prolyl-tRNA(Pro) + AMP + diphosphate. Catalyzes the attachment of proline to tRNA(Pro) in a two-step reaction: proline is first activated by ATP to form Pro-AMP and then transferred to the acceptor end of tRNA(Pro). As ProRS can inadvertently accommodate and process non-cognate amino acids such as alanine and cysteine, to avoid such errors it has two additional distinct editing activities against alanine. One activity is designated as 'pretransfer' editing and involves the tRNA(Pro)-independent hydrolysis of activated Ala-AMP. The other activity is designated 'posttransfer' editing and involves deacylation of mischarged Ala-tRNA(Pro). The misacylated Cys-tRNA(Pro) is not edited by ProRS. The protein is Proline--tRNA ligase of Macrococcus caseolyticus (strain JCSC5402) (Macrococcoides caseolyticum).